The chain runs to 360 residues: Magnesium-protoporphyrin IX monomethyl ester [oxidative] cyclase (360 aa).

This sequence belongs to the AcsF family. The cofactor is Fe cation.

The catalysed reaction is Mg-protoporphyrin IX 13-monomethyl ester + 3 NADPH + 3 O2 + 2 H(+) = 3,8-divinyl protochlorophyllide a + 3 NADP(+) + 5 H2O. Its pathway is porphyrin-containing compound metabolism; chlorophyll biosynthesis (light-independent). Functionally, catalyzes the formation of the isocyclic ring in chlorophyll biosynthesis. Mediates the cyclase reaction, which results in the formation of divinylprotochlorophyllide (Pchlide) characteristic of all chlorophylls from magnesium-protoporphyrin IX 13-monomethyl ester (MgPMME). The chain is Magnesium-protoporphyrin IX monomethyl ester [oxidative] cyclase from Synechococcus sp. (strain WH7803).